Here is a 337-residue protein sequence, read N- to C-terminus: Pyruvate dehydrogenase E1 component subunit beta (337 aa).

Position 73 (Glu-73) interacts with thiamine diphosphate.

As to quaternary structure, heterodimer of an alpha and a beta chain. It depends on thiamine diphosphate as a cofactor.

It carries out the reaction N(6)-[(R)-lipoyl]-L-lysyl-[protein] + pyruvate + H(+) = N(6)-[(R)-S(8)-acetyldihydrolipoyl]-L-lysyl-[protein] + CO2. In terms of biological role, the pyruvate dehydrogenase complex catalyzes the overall conversion of pyruvate to acetyl-CoA and CO(2). It contains multiple copies of three enzymatic components: pyruvate dehydrogenase (E1), dihydrolipoamide acetyltransferase (E2) and lipoamide dehydrogenase (E3). The protein is Pyruvate dehydrogenase E1 component subunit beta (pdhB) of Leifsonia xyli subsp. xyli (strain CTCB07).